We begin with the raw amino-acid sequence, 339 residues long: Anthranilate phosphoribosyltransferase (339 aa).

Residues Gly-79, 82–83 (GD), Thr-87, 89–92 (NIST), 107–115 (KHGNRAVSS), and Ser-119 each bind 5-phospho-alpha-D-ribose 1-diphosphate. Gly-79 is an anthranilate binding site. Ser-91 contributes to the Mg(2+) binding site. Asn-110 lines the anthranilate pocket. Arg-165 lines the anthranilate pocket. Mg(2+) contacts are provided by Asp-224 and Glu-225.

It belongs to the anthranilate phosphoribosyltransferase family. In terms of assembly, homodimer. Requires Mg(2+) as cofactor.

The catalysed reaction is N-(5-phospho-beta-D-ribosyl)anthranilate + diphosphate = 5-phospho-alpha-D-ribose 1-diphosphate + anthranilate. It functions in the pathway amino-acid biosynthesis; L-tryptophan biosynthesis; L-tryptophan from chorismate: step 2/5. Functionally, catalyzes the transfer of the phosphoribosyl group of 5-phosphorylribose-1-pyrophosphate (PRPP) to anthranilate to yield N-(5'-phosphoribosyl)-anthranilate (PRA). This Geobacillus thermodenitrificans (strain NG80-2) protein is Anthranilate phosphoribosyltransferase.